The sequence spans 467 residues: Histidine--tRNA ligase (467 aa).

The protein belongs to the class-II aminoacyl-tRNA synthetase family. As to quaternary structure, homodimer.

It localises to the cytoplasm. It carries out the reaction tRNA(His) + L-histidine + ATP = L-histidyl-tRNA(His) + AMP + diphosphate + H(+). This is Histidine--tRNA ligase from Gloeobacter violaceus (strain ATCC 29082 / PCC 7421).